The primary structure comprises 276 residues: NAD-capped RNA hydrolase NudC (276 aa).

R82 lines the substrate pocket. Residues C112 and C115 each contribute to the Zn(2+) site. Residue E125 coordinates substrate. 2 residues coordinate Zn(2+): C130 and C133. Y138 lines the substrate pocket. One can recognise a Nudix hydrolase domain in the interval P139–Y262. Residues A172, E188, and E192 each coordinate a divalent metal cation. A Nudix box motif is present at residues G173 to S194. Residue Q206–S213 coordinates substrate. E233 is an a divalent metal cation binding site. A255 provides a ligand contact to substrate.

The protein belongs to the Nudix hydrolase family. NudC subfamily. Homodimer. It depends on Mg(2+) as a cofactor. Requires Mn(2+) as cofactor. Zn(2+) serves as cofactor.

It carries out the reaction a 5'-end NAD(+)-phospho-ribonucleoside in mRNA + H2O = a 5'-end phospho-adenosine-phospho-ribonucleoside in mRNA + beta-nicotinamide D-ribonucleotide + 2 H(+). The enzyme catalyses NAD(+) + H2O = beta-nicotinamide D-ribonucleotide + AMP + 2 H(+). The catalysed reaction is NADH + H2O = reduced beta-nicotinamide D-ribonucleotide + AMP + 2 H(+). Functionally, mRNA decapping enzyme that specifically removes the nicotinamide adenine dinucleotide (NAD) cap from a subset of mRNAs by hydrolyzing the diphosphate linkage to produce nicotinamide mononucleotide (NMN) and 5' monophosphate mRNA. The NAD-cap is present at the 5'-end of some mRNAs and stabilizes RNA against 5'-processing. Has preference for mRNAs with a 5'-end purine. Catalyzes the hydrolysis of a broad range of dinucleotide pyrophosphates. This is NAD-capped RNA hydrolase NudC from Pseudomonas fluorescens (strain ATCC BAA-477 / NRRL B-23932 / Pf-5).